Here is a 609-residue protein sequence, read N- to C-terminus: Protein tesmin/TSO1-like CXC 3 (609 aa).

The span at 69 to 84 (ESRFRSQKDVSASKEV) shows a compositional bias: basic and acidic residues. Disordered regions lie at residues 69–102 (ESRF…YKND), 307–328 (PISP…SSCK), 457–477 (LFEQ…KTQQ), and 569–609 (NSKR…TPHH). The CRC domain occupies 326 to 451 (SCKRCNCKKS…RCEGCKNAFG (126 aa)). The segment covering 466–477 (TSGTPGTKKTQQ) has biased composition (polar residues).

This sequence belongs to the lin-54 family. As to expression, ubiquitous but expressed mostly in flowers and at significant levels in leaves. Detected with highest levels in developing ovules and microspores, and in petals.

Its subcellular location is the nucleus. Plays a role in development of both male and female reproductive tissues. This Arabidopsis thaliana (Mouse-ear cress) protein is Protein tesmin/TSO1-like CXC 3 (TCX3).